The following is a 107-amino-acid chain: Protein Rev (107 aa).

Serine 5 and serine 8 each carry phosphoserine; by host CK2. Residues 18 to 26 (IIKILYQSN) form a homomultimerization region. 2 disordered regions span residues 26 to 50 (NPYP…ARQR) and 82 to 107 (NINC…VGNP). The short motif at 34–50 (TRQARRNRRRRWRARQR) is the Nuclear localization signal and RNA-binding (RRE) element. Basic residues predominate over residues 36-50 (QARRNRRRRWRARQR). The short motif at 73 to 84 (FQLPPIERLNIN) is the Nuclear export signal and binding to XPO1 element. Over residues 86-101 (SESGGTSGTQQPQGNT) the composition is skewed to low complexity. Residue serine 92 is modified to Phosphoserine; by host.

The protein belongs to the HIV-1 REV protein family. As to quaternary structure, homomultimer; when bound to the RRE. Multimeric assembly is essential for activity and may involve XPO1. Binds to human KPNB1, XPO1, TNPO1, RANBP5 and IPO7. Interacts with the viral Integrase. Interacts with human KHDRBS1. Interacts with human NAP1; this interaction decreases Rev multimerization and stimulates its activity. Interacts with human DEAD-box helicases DDX3 and DDX24; these interactions may serve for viral RNA export to the cytoplasm and packaging, respectively. Interacts with human PSIP1; this interaction may inhibit HIV-1 DNA integration by promoting dissociation of the Integrase-LEDGF/p75 complex. In terms of processing, asymmetrically arginine dimethylated at one site by host PRMT6. Methylation impairs the RNA-binding activity and export of viral RNA from the nucleus to the cytoplasm. Phosphorylated by protein kinase CK2. Presence of, and maybe binding to the N-terminus of the regulatory beta subunit of CK2 is necessary for CK2-mediated Rev's phosphorylation.

Its subcellular location is the host nucleus. The protein localises to the host nucleolus. It localises to the host cytoplasm. Its function is as follows. Escorts unspliced or incompletely spliced viral pre-mRNAs (late transcripts) out of the nucleus of infected cells. These pre-mRNAs carry a recognition sequence called Rev responsive element (RRE) located in the env gene, that is not present in fully spliced viral mRNAs (early transcripts). This function is essential since most viral proteins are translated from unspliced or partially spliced pre-mRNAs which cannot exit the nucleus by the pathway used by fully processed cellular mRNAs. Rev itself is translated from a fully spliced mRNA that readily exits the nucleus. Rev's nuclear localization signal (NLS) binds directly to KPNB1/Importin beta-1 without previous binding to KPNA1/Importin alpha-1. KPNB1 binds to the GDP bound form of RAN (Ran-GDP) and targets Rev to the nucleus. In the nucleus, the conversion from Ran-GDP to Ran-GTP dissociates Rev from KPNB1 and allows Rev's binding to the RRE in viral pre-mRNAs. Rev multimerization on the RRE via cooperative assembly exposes its nuclear export signal (NES) to the surface. Rev can then form a complex with XPO1/CRM1 and Ran-GTP, leading to nuclear export of the complex. Conversion from Ran-GTP to Ran-GDP mediates dissociation of the Rev/RRE/XPO1/RAN complex, so that Rev can return to the nucleus for a subsequent round of export. Beside KPNB1, also seems to interact with TNPO1/Transportin-1, RANBP5/IPO5 and IPO7/RANBP7 for nuclear import. The nucleoporin-like HRB/RIP is an essential cofactor that probably indirectly interacts with Rev to release HIV RNAs from the perinuclear region to the cytoplasm. The protein is Protein Rev of Human immunodeficiency virus type 1 group M subtype C (isolate 92BR025) (HIV-1).